A 360-amino-acid chain; its full sequence is Phospho-N-acetylmuramoyl-pentapeptide-transferase (360 aa).

10 helical membrane-spanning segments follow: residues 18-38 (VFSY…MMSL), 73-93 (TMGG…WADL), 97-117 (YVWA…VDDY), 135-155 (FWQS…STQA), 168-188 (VLPQ…VGTS), 199-219 (GLAI…AYLT), 236-256 (ASEL…FLWF), 263-283 (VFMG…IAVL), 288-308 (LLLI…ILQV), and 339-359 (IVRF…TLKI).

It belongs to the glycosyltransferase 4 family. MraY subfamily. It depends on Mg(2+) as a cofactor.

The protein resides in the cell inner membrane. It catalyses the reaction UDP-N-acetyl-alpha-D-muramoyl-L-alanyl-gamma-D-glutamyl-meso-2,6-diaminopimeloyl-D-alanyl-D-alanine + di-trans,octa-cis-undecaprenyl phosphate = di-trans,octa-cis-undecaprenyl diphospho-N-acetyl-alpha-D-muramoyl-L-alanyl-D-glutamyl-meso-2,6-diaminopimeloyl-D-alanyl-D-alanine + UMP. It participates in cell wall biogenesis; peptidoglycan biosynthesis. In terms of biological role, catalyzes the initial step of the lipid cycle reactions in the biosynthesis of the cell wall peptidoglycan: transfers peptidoglycan precursor phospho-MurNAc-pentapeptide from UDP-MurNAc-pentapeptide onto the lipid carrier undecaprenyl phosphate, yielding undecaprenyl-pyrophosphoryl-MurNAc-pentapeptide, known as lipid I. This chain is Phospho-N-acetylmuramoyl-pentapeptide-transferase, found in Pseudoalteromonas translucida (strain TAC 125).